We begin with the raw amino-acid sequence, 100 residues long: NADH-quinone oxidoreductase subunit K (100 aa).

The next 3 membrane-spanning stretches (helical) occupy residues 4 to 24, 28 to 48, and 60 to 80; these read LTHG…GLVI, LLFM…AFVV, and IMYI…LALL.

It belongs to the complex I subunit 4L family. NDH-1 is composed of 13 different subunits. Subunits NuoA, H, J, K, L, M, N constitute the membrane sector of the complex.

Its subcellular location is the cell inner membrane. The enzyme catalyses a quinone + NADH + 5 H(+)(in) = a quinol + NAD(+) + 4 H(+)(out). In terms of biological role, NDH-1 shuttles electrons from NADH, via FMN and iron-sulfur (Fe-S) centers, to quinones in the respiratory chain. The immediate electron acceptor for the enzyme in this species is believed to be ubiquinone. Couples the redox reaction to proton translocation (for every two electrons transferred, four hydrogen ions are translocated across the cytoplasmic membrane), and thus conserves the redox energy in a proton gradient. The protein is NADH-quinone oxidoreductase subunit K of Klebsiella pneumoniae (strain 342).